The sequence spans 353 residues: UPF0283 membrane protein YcjF (353 aa).

The segment covering 1–19 (MSEPLKPRIDFAEPLKEEP) has biased composition (basic and acidic residues). The disordered stretch occupies residues 1–35 (MSEPLKPRIDFAEPLKEEPTSAFKAQQTFSEAESR). Helical transmembrane passes span 70–90 (MVMG…VQWT), 100–120 (VALG…GSVV), and 213–233 (ESTL…FIAW).

This sequence belongs to the UPF0283 family.

The protein resides in the cell inner membrane. This chain is UPF0283 membrane protein YcjF, found in Salmonella paratyphi A (strain AKU_12601).